A 452-amino-acid chain; its full sequence is Gastrin/cholecystokinin type B receptor (452 aa).

Residues 1–21 are disordered; sequence MELLKLNRSVQGPGPGSGSSL. Over 1–57 the chain is Extracellular; that stretch reads MELLKLNRSVQGPGPGSGSSLCRPGVSLLNSSSAGNLSCDPPRIRGTGTRELEMAIR. N-linked (GlcNAc...) asparagine glycosylation is found at asparagine 7, asparagine 30, and asparagine 36. The helical transmembrane segment at 58–79 threads the bilayer; the sequence is ITLYAVIFLMSVGGNVLIIVVL. The Cytoplasmic portion of the chain corresponds to 80–87; it reads GLSRRLRT. A helical membrane pass occupies residues 88–109; sequence VTNAFLLSLAVSDLLLAVACMP. The Extracellular segment spans residues 110 to 131; sequence FTLLPNLMGTFIFGTVICKAIS. Cysteine 127 and cysteine 205 form a disulfide bridge. A helical transmembrane segment spans residues 132–150; the sequence is YLMGVSVSVSTLNLVAIAL. The Cytoplasmic segment spans residues 151–170; it reads ERYSAICRPLQARVWQTRSH. A helical membrane pass occupies residues 171 to 189; that stretch reads AARVILATWLLSGLLMVPY. At 190-219 the chain is on the extracellular side; that stretch reads PVYTMVQPVGPRVLQCMHRWPSARVQQTWS. A helical transmembrane segment spans residues 220-242; the sequence is VLLLLLLFFIPGVVIAVAYGLIS. Residues 243-338 are Cytoplasmic-facing; it reads RELYLGLHFD…KLLAKKRVVR (96 aa). A disordered region spans residues 257–286; that stretch reads SETQSRARNQGGLPGGAAPGPVHQNGGCRP. A helical membrane pass occupies residues 339–360; that stretch reads MLLVIVLLFFLCWLPVYSVNTW. Topologically, residues 361–378 are extracellular; the sequence is RAFDGPGAQRALSGAPIS. The chain crosses the membrane as a helical span at residues 379 to 399; the sequence is FIHLLSYVSACVNPLVYCFMH. The Cytoplasmic segment spans residues 400 to 452; it reads RRFRQACLDTCARCCPRPPRARPQPLPDEDPPTPSIASLSRLSYTTISTLGPG. Residue cysteine 413 is the site of S-palmitoyl cysteine attachment. Residues 421–452 form a disordered region; the sequence is RPQPLPDEDPPTPSIASLSRLSYTTISTLGPG. Over residues 434-452 the composition is skewed to polar residues; sequence SIASLSRLSYTTISTLGPG.

It belongs to the G-protein coupled receptor 1 family. In terms of tissue distribution, parietal cells, pancreas, brain and various neoplastic tissues.

It localises to the cell membrane. In terms of biological role, receptor for gastrin and cholecystokinin. The CCK-B receptors occur throughout the central nervous system where they modulate anxiety, analgesia, arousal, and neuroleptic activity. This receptor mediates its action by association with G proteins that activate a phosphatidylinositol-calcium second messenger system. The chain is Gastrin/cholecystokinin type B receptor (Cckbr) from Rattus norvegicus (Rat).